Here is a 241-residue protein sequence, read N- to C-terminus: Probable transcriptional regulatory protein PSHAb0060 (241 aa).

Belongs to the TACO1 family.

It is found in the cytoplasm. In Pseudoalteromonas translucida (strain TAC 125), this protein is Probable transcriptional regulatory protein PSHAb0060.